A 137-amino-acid polypeptide reads, in one-letter code: Large-conductance mechanosensitive channel (137 aa).

Helical transmembrane passes span 10-30 (FAMR…AAFG) and 76-96 (GAFI…FMAI).

This sequence belongs to the MscL family. In terms of assembly, homopentamer.

It localises to the cell inner membrane. Channel that opens in response to stretch forces in the membrane lipid bilayer. May participate in the regulation of osmotic pressure changes within the cell. This chain is Large-conductance mechanosensitive channel, found in Pectobacterium carotovorum subsp. carotovorum (strain PC1).